The chain runs to 363 residues: 3-isopropylmalate dehydrogenase (363 aa).

Position 78-91 (78-91 (GPKWEHLPPAEQPE)) interacts with NAD(+). Substrate-binding residues include Arg-99, Arg-109, Arg-138, and Asp-227. Residues Asp-227, Asp-251, and Asp-255 each coordinate Mg(2+). 285–297 (GSAPDIAGKGIAN) contacts NAD(+).

This sequence belongs to the isocitrate and isopropylmalate dehydrogenases family. LeuB type 1 subfamily. Homodimer. The cofactor is Mg(2+). Mn(2+) is required as a cofactor.

The protein resides in the cytoplasm. The catalysed reaction is (2R,3S)-3-isopropylmalate + NAD(+) = 4-methyl-2-oxopentanoate + CO2 + NADH. The protein operates within amino-acid biosynthesis; L-leucine biosynthesis; L-leucine from 3-methyl-2-oxobutanoate: step 3/4. In terms of biological role, catalyzes the oxidation of 3-carboxy-2-hydroxy-4-methylpentanoate (3-isopropylmalate) to 3-carboxy-4-methyl-2-oxopentanoate. The product decarboxylates to 4-methyl-2 oxopentanoate. The polypeptide is 3-isopropylmalate dehydrogenase (Photorhabdus laumondii subsp. laumondii (strain DSM 15139 / CIP 105565 / TT01) (Photorhabdus luminescens subsp. laumondii)).